Consider the following 214-residue polypeptide: Protein verrocchio (214 aa).

As to quaternary structure, probably homomultimerizes. Component of the MTV complex, composed of moi/modigliani, tea and ver/verrocchio. Interacts with moi/modigliani and tea (via C-terminus); the interactions are direct and require fully intact moi/modigliani and ver/verrocchio. The MTV complex is recruited to telomeres by the HipHop-HOAP complex, consisting of HipHop, cav/HOAP and Su(var)205/HP1 to form the terminin telomere-capping complex. Interacts with cav/HOAP; the interaction is direct. Interacts with Su(var)205/HP1; the interaction is indirect and probably requires cav/HOAP or moi/modigliani. Probably interacts with peo (via N-terminus and UBC domain).

The protein localises to the nucleus. It is found in the chromosome. Its subcellular location is the telomere. Part of the MTV complex that associates with the HipHop-HOAP complex to form the terminin telomere-capping complex involved in telomere maintenance and prevention of telomere fusion. As part of the MTV complex binds single stranded DNA in a sequence-independent manner, protecting it from degradation. The chain is Protein verrocchio from Drosophila melanogaster (Fruit fly).